Here is a 376-residue protein sequence, read N- to C-terminus: RNA binding protein fox-1 homolog 1 (376 aa).

Positions 1 to 126 (MEEKGSRMVQ…QPKRLHVSNI (126 aa)) are disordered. Polar residues predominate over residues 72-89 (QTHSEQSPADTNAQTVSG). The span at 90-101 (TATQTDDAAPTD) shows a compositional bias: low complexity. The span at 102–115 (GQPQTQPSENTENK) shows a compositional bias: polar residues. The region spanning 119 to 195 (KRLHVSNIPF…RKIEVNNATA (77 aa)) is the RRM domain. Asymmetric dimethylarginine is present on Arg-319.

In terms of assembly, binds to the C-terminus of ATXN2.

It localises to the nucleus. Its subcellular location is the cytoplasm. Its function is as follows. RNA-binding protein that regulates alternative splicing events by binding to 5'-UGCAUGU-3' elements. Prevents binding of U2AF2 to the 3'-splice site. Regulates alternative splicing of tissue-specific exons and of differentially spliced exons during erythropoiesis. This Macaca fascicularis (Crab-eating macaque) protein is RNA binding protein fox-1 homolog 1 (RBFOX1).